The sequence spans 480 residues: Bifunctional protein HldE (480 aa).

The tract at residues 1–316 (MNMHDFSKTK…EQLNASMRHQ (316 aa)) is ribokinase. 192 to 195 (NQGE) provides a ligand contact to ATP. D261 is a catalytic residue. The cytidylyltransferase stretch occupies residues 342–480 (FTNGCFDLLH…EAEIKEGAAQ (139 aa)).

This sequence in the N-terminal section; belongs to the carbohydrate kinase PfkB family. It in the C-terminal section; belongs to the cytidylyltransferase family. Homodimer.

It carries out the reaction D-glycero-beta-D-manno-heptose 7-phosphate + ATP = D-glycero-beta-D-manno-heptose 1,7-bisphosphate + ADP + H(+). The catalysed reaction is D-glycero-beta-D-manno-heptose 1-phosphate + ATP + H(+) = ADP-D-glycero-beta-D-manno-heptose + diphosphate. Its pathway is nucleotide-sugar biosynthesis; ADP-L-glycero-beta-D-manno-heptose biosynthesis; ADP-L-glycero-beta-D-manno-heptose from D-glycero-beta-D-manno-heptose 7-phosphate: step 1/4. The protein operates within nucleotide-sugar biosynthesis; ADP-L-glycero-beta-D-manno-heptose biosynthesis; ADP-L-glycero-beta-D-manno-heptose from D-glycero-beta-D-manno-heptose 7-phosphate: step 3/4. Functionally, catalyzes the phosphorylation of D-glycero-D-manno-heptose 7-phosphate at the C-1 position to selectively form D-glycero-beta-D-manno-heptose-1,7-bisphosphate. Its function is as follows. Catalyzes the ADP transfer from ATP to D-glycero-beta-D-manno-heptose 1-phosphate, yielding ADP-D-glycero-beta-D-manno-heptose. The sequence is that of Bifunctional protein HldE from Hydrogenovibrio crunogenus (strain DSM 25203 / XCL-2) (Thiomicrospira crunogena).